A 72-amino-acid polypeptide reads, in one-letter code: NAD(P)H-quinone oxidoreductase subunit O (72 aa).

It belongs to the complex I NdhO subunit family. In terms of assembly, NDH-1 can be composed of about 15 different subunits; different subcomplexes with different compositions have been identified which probably have different functions.

The protein localises to the cellular thylakoid membrane. The enzyme catalyses a plastoquinone + NADH + (n+1) H(+)(in) = a plastoquinol + NAD(+) + n H(+)(out). It catalyses the reaction a plastoquinone + NADPH + (n+1) H(+)(in) = a plastoquinol + NADP(+) + n H(+)(out). NDH-1 shuttles electrons from an unknown electron donor, via FMN and iron-sulfur (Fe-S) centers, to quinones in the respiratory and/or the photosynthetic chain. The immediate electron acceptor for the enzyme in this species is believed to be plastoquinone. Couples the redox reaction to proton translocation, and thus conserves the redox energy in a proton gradient. Cyanobacterial NDH-1 also plays a role in inorganic carbon-concentration. This Synechococcus sp. (strain JA-3-3Ab) (Cyanobacteria bacterium Yellowstone A-Prime) protein is NAD(P)H-quinone oxidoreductase subunit O.